Reading from the N-terminus, the 145-residue chain is 6-pyruvoyl tetrahydrobiopterin synthase (145 aa).

Phosphoserine is present on S19. Zn(2+) is bound at residue H24. At S28 the chain carries Phosphoserine. The active-site Proton acceptor is the C43. Positions 49 and 51 each coordinate Zn(2+). H90 acts as the Charge relay system in catalysis. At Y128 the chain carries Phosphotyrosine. Catalysis depends on E134, which acts as the Charge relay system.

It belongs to the PTPS family. In terms of assembly, homohexamer formed of two homotrimers in a head to head fashion. Zn(2+) is required as a cofactor. Phosphorylation of Ser-19 is required for maximal enzyme activity.

It carries out the reaction 7,8-dihydroneopterin 3'-triphosphate = 6-pyruvoyl-5,6,7,8-tetrahydropterin + triphosphate + H(+). The protein operates within cofactor biosynthesis; tetrahydrobiopterin biosynthesis; tetrahydrobiopterin from 7,8-dihydroneopterin triphosphate: step 1/3. Involved in the biosynthesis of tetrahydrobiopterin, an essential cofactor of aromatic amino acid hydroxylases. Catalyzes the transformation of 7,8-dihydroneopterin triphosphate into 6-pyruvoyl tetrahydropterin. This is 6-pyruvoyl tetrahydrobiopterin synthase (PTS) from Pongo abelii (Sumatran orangutan).